The chain runs to 370 residues: Metallophosphoesterase 1 homolog (370 aa).

The helical transmembrane segment at 7–27 (CFVIVLCALIFCEYVADFVVL) threads the bilayer. Asp-52, Asp-94, Asn-132, His-225, His-275, and His-277 together coordinate a divalent metal cation. Residues 328-348 (FVFNSYLSAGILCLIVIGFQL) form a helical membrane-spanning segment.

It belongs to the metallophosphoesterase superfamily. MPPE1 family. Requires Mn(2+) as cofactor.

The protein localises to the membrane. Metallophosphoesterase. The chain is Metallophosphoesterase 1 homolog (PGAP5) from Drosophila melanogaster (Fruit fly).